The primary structure comprises 118 residues: Large ribosomal subunit protein uL18 (118 aa).

This sequence belongs to the universal ribosomal protein uL18 family. In terms of assembly, part of the 50S ribosomal subunit; part of the 5S rRNA/L5/L18/L25 subcomplex. Contacts the 5S and 23S rRNAs.

Functionally, this is one of the proteins that bind and probably mediate the attachment of the 5S RNA into the large ribosomal subunit, where it forms part of the central protuberance. The polypeptide is Large ribosomal subunit protein uL18 (Ligilactobacillus salivarius (strain UCC118) (Lactobacillus salivarius)).